The sequence spans 776 residues: Ribosomal RNA large subunit methyltransferase K/L (776 aa).

Residues 68–183 (DLYKICLWSR…DKQAELYLDL (116 aa)) form the THUMP domain.

It belongs to the methyltransferase superfamily. RlmKL family.

It is found in the cytoplasm. The enzyme catalyses guanosine(2445) in 23S rRNA + S-adenosyl-L-methionine = N(2)-methylguanosine(2445) in 23S rRNA + S-adenosyl-L-homocysteine + H(+). It catalyses the reaction guanosine(2069) in 23S rRNA + S-adenosyl-L-methionine = N(2)-methylguanosine(2069) in 23S rRNA + S-adenosyl-L-homocysteine + H(+). Functionally, specifically methylates the guanine in position 2445 (m2G2445) and the guanine in position 2069 (m7G2069) of 23S rRNA. In Psychrobacter cryohalolentis (strain ATCC BAA-1226 / DSM 17306 / VKM B-2378 / K5), this protein is Ribosomal RNA large subunit methyltransferase K/L.